A 165-amino-acid polypeptide reads, in one-letter code: Large ribosomal subunit protein eL15 (165 aa).

The disordered stretch occupies residues 126 to 147 (TSAGRKSRGLGKGHKFHHTIGG). Positions 130–143 (RKSRGLGKGHKFHH) are enriched in basic residues.

This sequence belongs to the eukaryotic ribosomal protein eL15 family. In terms of assembly, component of the large ribosomal subunit.

The protein resides in the cytoplasm. In terms of biological role, component of the large ribosomal subunit. The ribosome is a large ribonucleoprotein complex responsible for the synthesis of proteins in the cell. This is Large ribosomal subunit protein eL15 (RPL15) from Gallus gallus (Chicken).